The sequence spans 241 residues: MDMKEWEIFYNKIMEDFGFDKDKDVESAVILNNILENANTIPVDKLKDIIEGREVFIFGAGPSIKKHINILKELREINYKNPIIVADGACKAFLEENIIPDIIVSDLDGDLEALFECNRKGSIIVVHAHGDNIEKIKKYVPKLKNVVGSCQIPNYKELNLRNVINFGGFTDGDRCCFLAYHFKAKKLILGGMDFGIYITKYSRPNIKEDIAIGDEIKIKKLEYAKTLINYLKDKIEIEFLK.

This sequence belongs to the archaeal 6-HMPDK family. Mg(2+) is required as a cofactor.

The catalysed reaction is 6-hydroxymethyl-7,8-dihydropterin + ATP = (7,8-dihydropterin-6-yl)methyl diphosphate + AMP + H(+). Its pathway is cofactor biosynthesis; 5,6,7,8-tetrahydromethanopterin biosynthesis. Catalyzes the transfer of diphosphate from ATP to 6-hydroxymethyl-7,8-dihydropterin (6-HMD), leading to 6-hydroxymethyl-7,8-dihydropterin diphosphate (6-HMDP). This Methanocaldococcus jannaschii (strain ATCC 43067 / DSM 2661 / JAL-1 / JCM 10045 / NBRC 100440) (Methanococcus jannaschii) protein is 6-hydroxymethyl-7,8-dihydropterin pyrophosphokinase.